Reading from the N-terminus, the 419-residue chain is Tol-Pal system protein TolB (419 aa).

The signal sequence occupies residues 1–19 (MFNRIISLFLLLFTGQVIA).

It belongs to the TolB family. The Tol-Pal system is composed of five core proteins: the inner membrane proteins TolA, TolQ and TolR, the periplasmic protein TolB and the outer membrane protein Pal. They form a network linking the inner and outer membranes and the peptidoglycan layer.

It is found in the periplasm. Its function is as follows. Part of the Tol-Pal system, which plays a role in outer membrane invagination during cell division and is important for maintaining outer membrane integrity. The sequence is that of Tol-Pal system protein TolB from Legionella pneumophila (strain Corby).